The chain runs to 109 residues: Large ribosomal subunit protein uL22 (109 aa).

This sequence belongs to the universal ribosomal protein uL22 family. In terms of assembly, part of the 50S ribosomal subunit.

Its function is as follows. This protein binds specifically to 23S rRNA; its binding is stimulated by other ribosomal proteins, e.g. L4, L17, and L20. It is important during the early stages of 50S assembly. It makes multiple contacts with different domains of the 23S rRNA in the assembled 50S subunit and ribosome. Functionally, the globular domain of the protein is located near the polypeptide exit tunnel on the outside of the subunit, while an extended beta-hairpin is found that lines the wall of the exit tunnel in the center of the 70S ribosome. The protein is Large ribosomal subunit protein uL22 of Thiobacillus denitrificans (strain ATCC 25259 / T1).